A 166-amino-acid polypeptide reads, in one-letter code: ATP synthase subunit b (166 aa).

The helical transmembrane segment at 27–47 threads the bilayer; the sequence is FFVVLLIFLIVLGVIAKWVVP. The segment at 124 to 143 is disordered; the sequence is SADQQLSQQGSAAQSELQSS.

It belongs to the ATPase B chain family. In terms of assembly, F-type ATPases have 2 components, F(1) - the catalytic core - and F(0) - the membrane proton channel. F(1) has five subunits: alpha(3), beta(3), gamma(1), delta(1), epsilon(1). F(0) has three main subunits: a(1), b(2) and c(10-14). The alpha and beta chains form an alternating ring which encloses part of the gamma chain. F(1) is attached to F(0) by a central stalk formed by the gamma and epsilon chains, while a peripheral stalk is formed by the delta and b chains.

Its subcellular location is the cell membrane. Functionally, f(1)F(0) ATP synthase produces ATP from ADP in the presence of a proton or sodium gradient. F-type ATPases consist of two structural domains, F(1) containing the extramembraneous catalytic core and F(0) containing the membrane proton channel, linked together by a central stalk and a peripheral stalk. During catalysis, ATP synthesis in the catalytic domain of F(1) is coupled via a rotary mechanism of the central stalk subunits to proton translocation. Its function is as follows. Component of the F(0) channel, it forms part of the peripheral stalk, linking F(1) to F(0). The sequence is that of ATP synthase subunit b from Mycolicibacterium vanbaalenii (strain DSM 7251 / JCM 13017 / BCRC 16820 / KCTC 9966 / NRRL B-24157 / PYR-1) (Mycobacterium vanbaalenii).